A 367-amino-acid chain; its full sequence is Biotin--protein ligase 1, chloroplastic (367 aa).

The transit peptide at 1 to 37 (MEAVRSTTTLSNFHLLNILVLRSLKPLHRLSFSFSAS) directs the protein to the chloroplast. The BPL/LPL catalytic domain maps to 105–289 (IITHRFGRFL…KFEKFFDLFM (185 aa)). Residues 122–124 (STH), glutamine 145, 149–151 (RGR), and lysine 220 each bind biotin.

This sequence belongs to the biotin--protein ligase family. Expressed in roots, leaves, stems, flowers, siliques and seeds.

The protein resides in the plastid. It localises to the chloroplast. It is found in the cytoplasm. The protein localises to the cytosol. The enzyme catalyses apo-[3-methylcrotonoyl-CoA:carbon-dioxide ligase (ADP-forming)] + biotin + ATP = holo-[3-methylcrotonoyl-CoA:carbon-dioxide ligase (ADP-forming)] + AMP + diphosphate + H(+). The catalysed reaction is biotin + L-lysyl-[protein] + ATP = N(6)-biotinyl-L-lysyl-[protein] + AMP + diphosphate + H(+). In terms of biological role, plays a major role in biotin-dependent carboxylase biotinylation. Catalyzes the addition of biotin to the biotin carboxyl carrier protein (BCCP) subunit of acetyl-CoA carboxylase. Can also biotinylate methylcrotonyl-CoA carboxylase. Is responsible for most, if not all, biotin--protein ligase activity in Arabidopsis. Is essential for plant viability and required for ovule development. This chain is Biotin--protein ligase 1, chloroplastic, found in Arabidopsis thaliana (Mouse-ear cress).